The primary structure comprises 115 residues: Nitrogenase-stabilizing/protective protein NifW (115 aa).

This sequence belongs to the NifW family. As to quaternary structure, homotrimer; associates with NifD.

Its function is as follows. May protect the nitrogenase Fe-Mo protein from oxidative damage. In Methylobacterium sp. (strain 4-46), this protein is Nitrogenase-stabilizing/protective protein NifW.